The primary structure comprises 328 residues: 4-hydroxythreonine-4-phosphate dehydrogenase (328 aa).

Thr125 provides a ligand contact to substrate. A divalent metal cation-binding residues include His160, His203, and His269. Substrate is bound by residues Lys277, Asn286, and Arg295.

The protein belongs to the PdxA family. As to quaternary structure, homodimer. A divalent metal cation is required as a cofactor.

Its subcellular location is the cytoplasm. It catalyses the reaction 4-(phosphooxy)-L-threonine + NAD(+) = 3-amino-2-oxopropyl phosphate + CO2 + NADH. It participates in cofactor biosynthesis; pyridoxine 5'-phosphate biosynthesis; pyridoxine 5'-phosphate from D-erythrose 4-phosphate: step 4/5. In terms of biological role, catalyzes the NAD(P)-dependent oxidation of 4-(phosphooxy)-L-threonine (HTP) into 2-amino-3-oxo-4-(phosphooxy)butyric acid which spontaneously decarboxylates to form 3-amino-2-oxopropyl phosphate (AHAP). This is 4-hydroxythreonine-4-phosphate dehydrogenase from Synechococcus sp. (strain RCC307).